Here is a 374-residue protein sequence, read N- to C-terminus: Flap endonuclease 1 (374 aa).

Residues 1–105 (MGVKGLNKLI…GELEKRLLRR (105 aa)) form an N-domain region. Asp34 lines the Mg(2+) pocket. Residues Arg47 and Arg71 each contribute to the DNA site. Asp87, Glu159, Glu161, Asp180, and Asp182 together coordinate Mg(2+). The tract at residues 123–254 (DHLKFEKRLV…VTAYKLIKEH (132 aa)) is I-domain. Glu159 is a binding site for DNA. Residues Gly232 and Asp234 each coordinate DNA. Asp234 provides a ligand contact to Mg(2+). Positions 339–347 (VQGRLDSFF) are interaction with PCNA. The interval 353-374 (DDGKDKKRKSTAKDTKSKKQKK) is disordered.

This sequence belongs to the XPG/RAD2 endonuclease family. FEN1 subfamily. Interacts with PCNA. Three molecules of RAD27 bind to one PCNA trimer with each molecule binding to one PCNA monomer. PCNA stimulates the nuclease activity without altering cleavage specificity. Mg(2+) serves as cofactor. Post-translationally, phosphorylated. Phosphorylation upon DNA damage induces relocalization to the nuclear plasma.

It localises to the nucleus. The protein resides in the nucleolus. It is found in the nucleoplasm. The protein localises to the mitochondrion. In terms of biological role, structure-specific nuclease with 5'-flap endonuclease and 5'-3' exonuclease activities involved in DNA replication and repair. During DNA replication, cleaves the 5'-overhanging flap structure that is generated by displacement synthesis when DNA polymerase encounters the 5'-end of a downstream Okazaki fragment. It enters the flap from the 5'-end and then tracks to cleave the flap base, leaving a nick for ligation. Also involved in the long patch base excision repair (LP-BER) pathway, by cleaving within the apurinic/apyrimidinic (AP) site-terminated flap. Acts as a genome stabilization factor that prevents flaps from equilibrating into structures that lead to duplications and deletions. Also possesses 5'-3' exonuclease activity on nicked or gapped double-stranded DNA, and exhibits RNase H activity. Also involved in replication and repair of rDNA and in repairing mitochondrial DNA. The chain is Flap endonuclease 1 from Candida tropicalis (strain ATCC MYA-3404 / T1) (Yeast).